The chain runs to 371 residues: Methionine import ATP-binding protein MetN (371 aa).

The 242-residue stretch at 29 to 270 (IRIEGVRKVY…PRHEVTRRFV (242 aa)) folds into the ABC transporter domain. 67-74 (GRSGAGKS) is an ATP binding site.

Belongs to the ABC transporter superfamily. Methionine importer (TC 3.A.1.24) family. The complex is composed of two ATP-binding proteins (MetN), two transmembrane proteins (MetI) and a solute-binding protein (MetQ).

It is found in the cell inner membrane. The enzyme catalyses L-methionine(out) + ATP + H2O = L-methionine(in) + ADP + phosphate + H(+). It catalyses the reaction D-methionine(out) + ATP + H2O = D-methionine(in) + ADP + phosphate + H(+). In terms of biological role, part of the ABC transporter complex MetNIQ involved in methionine import. Responsible for energy coupling to the transport system. The protein is Methionine import ATP-binding protein MetN of Rhodopseudomonas palustris (strain BisA53).